We begin with the raw amino-acid sequence, 210 residues long: Probable nicotinate-nucleotide adenylyltransferase (210 aa).

Belongs to the NadD family.

The catalysed reaction is nicotinate beta-D-ribonucleotide + ATP + H(+) = deamido-NAD(+) + diphosphate. It participates in cofactor biosynthesis; NAD(+) biosynthesis; deamido-NAD(+) from nicotinate D-ribonucleotide: step 1/1. Catalyzes the reversible adenylation of nicotinate mononucleotide (NaMN) to nicotinic acid adenine dinucleotide (NaAD). The sequence is that of Probable nicotinate-nucleotide adenylyltransferase from Streptococcus pyogenes serotype M3 (strain ATCC BAA-595 / MGAS315).